A 334-amino-acid chain; its full sequence is MEPGPTAAQRRCSLPPWLPLGLLLWSGLALGALPFGSSPHRVFHDLLSEQQLLEVEDLSLSLLQGGGLGPLSLPPDLPDLDPECRELLLDFANSSAELTGCLVRSARPVRLCQTCYPLFQQVVSKMDNISRAAGNTSESQSCARSLLMADRMQIVVILSEFFNTTWQEANCANCLTNNSEELSNSTVYFLNLFNHTLTCFEHNLQGNAHSLLQTKNYSEVCKNCREAYKTLSSLYSEMQKMNELENKAEPGTHLCIDVEDAMNITRKLWSRTFNCSVPCSDTVPVIAVSVFILFLPVVFYLSSFLHSEQKKRKLILPKRLKSSTSFANIQENSN.

The N-terminal stretch at 1-31 is a signal peptide; it reads MEPGPTAAQRRCSLPPWLPLGLLLWSGLALG. The Lumenal portion of the chain corresponds to 32 to 284; it reads ALPFGSSPHR…CSVPCSDTVP (253 aa). N-linked (GlcNAc...) asparagine glycans are attached at residues Asn93, Asn128, Asn135, Asn163, Asn177, Asn184, Asn194, Asn216, Asn263, and Asn274. Residues 285–305 form a helical membrane-spanning segment; it reads VIAVSVFILFLPVVFYLSSFL. Residues 306 to 334 lie on the Cytoplasmic side of the membrane; it reads HSEQKKRKLILPKRLKSSTSFANIQENSN. Phosphoserine occurs at positions 322, 325, and 333.

This sequence belongs to the OSTM1 family. As to quaternary structure, chloride channel 7 are heteromers of alpha (CLCN7) and beta (OSTM1) subunits. In terms of processing, undergoes proteolytic cleavage in the luminal domain, the cleaved fragments might be linked by disulfide bonds with the remnant of the protein. Post-translationally, highly N-glycosylated.

It localises to the lysosome membrane. In terms of biological role, required for osteoclast and melanocyte maturation and function. The protein is Osteopetrosis-associated transmembrane protein 1 (OSTM1) of Homo sapiens (Human).